A 274-amino-acid polypeptide reads, in one-letter code: Mitogen-activated protein kinase 4 (274 aa).

Residues 1 to 8 (GCGGNGLV) and lysine 23 contribute to the ATP site. Residues 1–274 (GCGGNGLVLS…KILTFSPMDR (274 aa)) form the Protein kinase domain. The Proton acceptor role is filled by aspartate 123. Serine 160 carries the phosphoserine modification. The SEG motif motif lies at 160-162 (SEG).

It belongs to the protein kinase superfamily. CMGC Ser/Thr protein kinase family. MAP kinase subfamily. In terms of assembly, homodimer. Heterodimer with ERK3/MAPK6. Interacts with MAPKAPK5. Mg(2+) serves as cofactor. Phosphorylated by PAK1, PAK2 and PAK3 in the activation loop resulting in catalytic activation. Phosphorylated by MAPKAPK5 at other sites. As to expression, exclusively detected in the brain, where expression is restricted to the choroid plexus and hippocampus, and to a lesser extent in lung.

Its subcellular location is the cytoplasm. It localises to the nucleus. The enzyme catalyses L-seryl-[protein] + ATP = O-phospho-L-seryl-[protein] + ADP + H(+). It catalyses the reaction L-threonyl-[protein] + ATP = O-phospho-L-threonyl-[protein] + ADP + H(+). Its activity is regulated as follows. Activated by phosphorylation in the activation loop. Atypical MAPK protein. Phosphorylates microtubule-associated protein 2 (MAP2) and MAPKAPK5. The precise role of the complex formed with MAPKAPK5 is still unclear, but the complex follows a complex set of phosphorylation events: upon interaction with atypical MAPKAPK5, ERK4/MAPK4 is phosphorylated and then mediates phosphorylation and activation of MAPKAPK5, which in turn phosphorylates ERK4/MAPK4. May promote entry in the cell cycle. This Rattus norvegicus (Rat) protein is Mitogen-activated protein kinase 4 (Mapk4).